Reading from the N-terminus, the 975-residue chain is Translation initiation factor IF-2 (975 aa).

Disordered stretches follow at residues 49–110 and 193–339; these read KLSG…APKA and AAAP…GRGA. Residues 63–72 are compositionally biased toward basic residues; it reads KKTAARKAAP. 3 stretches are compositionally biased toward low complexity: residues 73–94, 193–202, and 209–225; these read KKAA…AKTP, AAAPEAPAPQ, and VVGT…ASAP. Residues 308–318 show a composition bias toward basic and acidic residues; sequence GADRGGRDFDK. Residues 324-336 show a composition bias toward low complexity; the sequence is GPSAPAAGPAAAG. The tr-type G domain maps to 469-639; that stretch reads TRPPVVTVMG…KLVAEVAELK (171 aa). A G1 region spans residues 478-485; that stretch reads GHVDHGKT. 478–485 is a binding site for GTP; that stretch reads GHVDHGKT. A G2 region spans residues 503–507; it reads GITQH. Residues 525–528 are G3; the sequence is DTPG. Residues 525–529 and 579–582 contribute to the GTP site; these read DTPGH and NKID. Residues 579–582 form a G4 region; it reads NKID. The G5 stretch occupies residues 615–617; it reads SAL.

This sequence belongs to the TRAFAC class translation factor GTPase superfamily. Classic translation factor GTPase family. IF-2 subfamily.

The protein resides in the cytoplasm. Its function is as follows. One of the essential components for the initiation of protein synthesis. Protects formylmethionyl-tRNA from spontaneous hydrolysis and promotes its binding to the 30S ribosomal subunits. Also involved in the hydrolysis of GTP during the formation of the 70S ribosomal complex. The sequence is that of Translation initiation factor IF-2 from Bdellovibrio bacteriovorus (strain ATCC 15356 / DSM 50701 / NCIMB 9529 / HD100).